The chain runs to 162 residues: Putative ethylene-responsive transcription factor ERF121 (162 aa).

Disordered stretches follow at residues 1–21, 84–103, and 139–162; these read MDYSENVQNKNFTPISQPPNL, IKQEKKHKGVRKKPSGKWSA, and KRSARRGSKKGEGSIHQEVGGGDD. Basic residues predominate over residues 87 to 98; that stretch reads EKKHKGVRKKPS. A DNA-binding region (AP2/ERF) is located at residues 89-146; sequence KHKGVRKKPSGKWSAEIWDPSTRTRRWLGTFPTAEMAADAYDEAAAALVEKRSARRGS.

It belongs to the AP2/ERF transcription factor family. ERF subfamily.

The protein localises to the nucleus. Probably acts as a transcriptional activator. Binds to the GCC-box pathogenesis-related promoter element. May be involved in the regulation of gene expression by stress factors and by components of stress signal transduction pathways. The protein is Putative ethylene-responsive transcription factor ERF121 (ERF121) of Arabidopsis thaliana (Mouse-ear cress).